Reading from the N-terminus, the 251-residue chain is Maleate isomerase (251 aa).

Residues N14, C76 to V78, Y133, and N163 each bind substrate. C76 (nucleophile) is an active-site residue. An S-(2-succinyl)cysteine modification is found at C76. Catalysis depends on C194, which acts as the Proton donor. V195–Q196 lines the substrate pocket.

Belongs to the maleate isomerase family. Homodimer.

It catalyses the reaction maleate = fumarate. Catalyzes cis-trans isomerization of the C2-C3 double bond in maleate to yield fumarate. Shows a strict specificity for maleate, with no activity detected toward structurally related substrates including citraconate, mesaconate, dimethylmaleate, and maleamide. The polypeptide is Maleate isomerase (Nocardia farcinica (strain IFM 10152)).